The primary structure comprises 669 residues: Sodium-dependent phosphate transporter (669 aa).

At 1–6 (MVTGPD) the chain is on the extracellular side. The helical transmembrane segment at 7 to 27 (MLWLVITSGIACFFMAFVTGA) threads the bilayer. Residues 28–47 (NDIANTFSTSIGSKAISIKK) lie on the Cytoplasmic side of the membrane. Residues 48 to 68 (ALIVAFFFEALGASLLGGTVT) traverse the membrane as a helical segment. Residues 69–86 (DSIRSKIINFQVFYDTPE) lie on the Extracellular side of the membrane. A helical transmembrane segment spans residues 87-107 (FLMLGMCCALMGATVWLAVAT). Residue Arg-108 is a topological domain, cytoplasmic. Residues 109-129 (AGLPVSTTHSIIGALLGFGLA) traverse the membrane as a helical segment. At 130–143 (TGNMKSIKWEKINN) the chain is on the extracellular side. The chain crosses the membrane as a helical span at residues 144 to 164 (IVISWLAAPILAGTCSAIAFT). Residues 165–186 (VLRMLILRKKNSFEIIKKMYWF) are Cytoplasmic-facing. A helical transmembrane segment spans residues 187–207 (LIFLITLPFSVFLIFHNPIVI). At 208-239 (NTQCKMKKDGKVIVSSPCYIEDWSAAHSFYAS) the chain is on the extracellular side. A helical membrane pass occupies residues 240-260 (IICILLSSLLTAIGSFVIYII). Topologically, residues 261–502 (YNKRINNYNL…YNNGIRGKIK (242 aa)) are cytoplasmic. Over residues 311 to 335 (AHNNTSNGTKQNQVGNGTKSNNNNV) the composition is skewed to polar residues. Disordered stretches follow at residues 311-364 (AHNN…SVEA) and 392-444 (TNMN…KNME). Residues 342–352 (KNVKSQQDDSK) show a composition bias toward basic and acidic residues. Over residues 395 to 433 (NENNNNSNKNNNSNKNNNSNKNNNSNKNNNSNNGNSNEG) the composition is skewed to low complexity. A helical membrane pass occupies residues 503–523 (VQWYILLFGGLSMSLGLSIMG). Residues 524 to 542 (YRVIKTVGMKLIKITPARG) are Extracellular-facing. The chain crosses the membrane as a helical span at residues 543-563 (FTIELISGLVVLFFSICGIPL). Over 564 to 632 (SSTHCAVSSV…TSCVNLRLFR (69 aa)) the chain is Cytoplasmic. A helical transmembrane segment spans residues 633-653 (TVFLSWILTVVFSATVTAGIY). The Extracellular segment spans residues 654–669 (SFAAYSPSYIMKMQTV).

The protein belongs to the inorganic phosphate transporter (PiT) (TC 2.A.20) family.

The protein localises to the cell membrane. It catalyses the reaction 2 Na(+)(out) + phosphate(out) = 2 Na(+)(in) + phosphate(in). In terms of biological role, sodium-phosphate symporter which preferentially transports the monovalent form of phosphate with a stoichiometry of two sodium ions per phosphate ion. The sequence is that of Sodium-dependent phosphate transporter from Plasmodium falciparum.